The following is a 148-amino-acid chain: UPF0178 protein SUN_1096 (148 aa).

This sequence belongs to the UPF0178 family.

This chain is UPF0178 protein SUN_1096, found in Sulfurovum sp. (strain NBC37-1).